The primary structure comprises 311 residues: Aspartate carbamoyltransferase catalytic subunit (311 aa).

Carbamoyl phosphate is bound by residues Arg55 and Thr56. Lys85 contributes to the L-aspartate binding site. Carbamoyl phosphate contacts are provided by Arg106, His135, and Gln138. 2 residues coordinate L-aspartate: Arg168 and Arg230. The carbamoyl phosphate site is built by Leu268 and Pro269.

It belongs to the aspartate/ornithine carbamoyltransferase superfamily. ATCase family. In terms of assembly, heterododecamer (2C3:3R2) of six catalytic PyrB chains organized as two trimers (C3), and six regulatory PyrI chains organized as three dimers (R2).

It catalyses the reaction carbamoyl phosphate + L-aspartate = N-carbamoyl-L-aspartate + phosphate + H(+). Its pathway is pyrimidine metabolism; UMP biosynthesis via de novo pathway; (S)-dihydroorotate from bicarbonate: step 2/3. Catalyzes the condensation of carbamoyl phosphate and aspartate to form carbamoyl aspartate and inorganic phosphate, the committed step in the de novo pyrimidine nucleotide biosynthesis pathway. The sequence is that of Aspartate carbamoyltransferase catalytic subunit from Proteus mirabilis (strain HI4320).